Reading from the N-terminus, the 362-residue chain is 3-isopropylmalate dehydrogenase (362 aa).

78–91 (GPQWDTLPSDKRPE) is an NAD(+) binding site. 4 residues coordinate substrate: arginine 98, arginine 108, arginine 136, and aspartate 226. Mg(2+) contacts are provided by aspartate 226, aspartate 250, and aspartate 254. 284-296 (GSAPDIAGQDKAN) contacts NAD(+).

It belongs to the isocitrate and isopropylmalate dehydrogenases family. LeuB type 1 subfamily. As to quaternary structure, homodimer. Mg(2+) is required as a cofactor. Requires Mn(2+) as cofactor.

It is found in the cytoplasm. It catalyses the reaction (2R,3S)-3-isopropylmalate + NAD(+) = 4-methyl-2-oxopentanoate + CO2 + NADH. It participates in amino-acid biosynthesis; L-leucine biosynthesis; L-leucine from 3-methyl-2-oxobutanoate: step 3/4. Its function is as follows. Catalyzes the oxidation of 3-carboxy-2-hydroxy-4-methylpentanoate (3-isopropylmalate) to 3-carboxy-4-methyl-2-oxopentanoate. The product decarboxylates to 4-methyl-2 oxopentanoate. This is 3-isopropylmalate dehydrogenase from Gloeobacter violaceus (strain ATCC 29082 / PCC 7421).